Here is a 119-residue protein sequence, read N- to C-terminus: MTSRILQRFFTVSTSLRSLTRAEVPGEKIDAKRARLLYQSKKRGILENDILLGDFAEQNLKKMSEPELKAYDKLINGEHMEWDLFYYLSNKKSPPEDVESCQVYQKVKKFVDDKRVPKS.

Belongs to the SDHAF2 family. As to quaternary structure, interacts with the flavoprotein subunit within the SDH catalytic dimer.

The protein localises to the mitochondrion matrix. Plays an essential role in the assembly of succinate dehydrogenase (SDH), an enzyme complex (also referred to as respiratory complex II) that is a component of both the tricarboxylic acid (TCA) cycle and the mitochondrial electron transport chain, and which couples the oxidation of succinate to fumarate with the reduction of ubiquinone (coenzyme Q) to ubiquinol. Required for flavinylation (covalent attachment of FAD) of the flavoprotein subunit of the SDH catalytic dimer. This chain is Succinate dehydrogenase assembly factor 2, mitochondrial, found in Caenorhabditis elegans.